We begin with the raw amino-acid sequence, 407 residues long: [Pyruvate dehydrogenase (acetyl-transferring)] kinase isozyme 2, mitochondrial (407 aa).

One can recognise a Histidine kinase domain in the interval L135 to S364. Phosphotyrosine occurs at positions 215 and 216. ATP is bound by residues E251–R258, D290, S309–T310, and G325–L330. Position 376 is an N6-succinyllysine (K376).

This sequence belongs to the PDK/BCKDK protein kinase family. In terms of assembly, homodimer, and heterodimer with PDK1. Interacts with the pyruvate dehydrogenase complex subunit DLAT, and is part of the multimeric pyruvate dehydrogenase complex that contains multiple copies of pyruvate dehydrogenase (E1), dihydrolipoamide acetyltransferase (DLAT, E2) and lipoamide dehydrogenase (DLD, E3). As to expression, expressed in many tissues, with the highest level in heart and skeletal muscle, intermediate levels in brain, kidney, pancreas and liver, and low levels in placenta and lung.

Its subcellular location is the mitochondrion matrix. It carries out the reaction L-seryl-[pyruvate dehydrogenase E1 alpha subunit] + ATP = O-phospho-L-seryl-[pyruvate dehydrogenase E1 alpha subunit] + ADP + H(+). Its activity is regulated as follows. Activity is enhanced by binding to the pyruvate dehydrogenase subunit DLAT. Inhibited by ADP and pyruvate; these compounds interfere with DLAT binding and thereby inhibit kinase activity. Inhibited by dichloroacetate. Inhibited by AZD7545; this compound interferes with DLAT binding and thereby inhibits kinase activity. Functionally, kinase that plays a key role in the regulation of glucose and fatty acid metabolism and homeostasis via phosphorylation of the pyruvate dehydrogenase subunits PDHA1 and PDHA2. This inhibits pyruvate dehydrogenase activity, and thereby regulates metabolite flux through the tricarboxylic acid cycle, down-regulates aerobic respiration and inhibits the formation of acetyl-coenzyme A from pyruvate. Inhibition of pyruvate dehydrogenase decreases glucose utilization and increases fat metabolism. Mediates cellular responses to insulin. Plays an important role in maintaining normal blood glucose levels and in metabolic adaptation to nutrient availability. Via its regulation of pyruvate dehydrogenase activity, plays an important role in maintaining normal blood pH and in preventing the accumulation of ketone bodies under starvation. Plays a role in the regulation of cell proliferation and in resistance to apoptosis under oxidative stress. Plays a role in p53/TP53-mediated apoptosis. The protein is [Pyruvate dehydrogenase (acetyl-transferring)] kinase isozyme 2, mitochondrial (PDK2) of Homo sapiens (Human).